The sequence spans 365 residues: Carbamoyl phosphate synthase small chain (365 aa).

CPSase regions lie at residues 1–166 and 1–169; these read MKRQ…PSPG and MKRQ…GRGH. L-glutamine-binding residues include Ser-45, Gly-218, and Gly-220. A Glutamine amidotransferase type-1 domain is found at 170 to 357; that stretch reads RVVLVDFGMK…LTMIENFKKE (188 aa). Cys-245 serves as the catalytic Nucleophile. L-glutamine-binding residues include Leu-246, Gln-249, Asn-287, Gly-289, and Tyr-290. Catalysis depends on residues His-330 and Glu-332.

This sequence belongs to the CarA family. As to quaternary structure, composed of two chains; the small (or glutamine) chain promotes the hydrolysis of glutamine to ammonia, which is used by the large (or ammonia) chain to synthesize carbamoyl phosphate. Tetramer of heterodimers (alpha,beta)4.

The enzyme catalyses hydrogencarbonate + L-glutamine + 2 ATP + H2O = carbamoyl phosphate + L-glutamate + 2 ADP + phosphate + 2 H(+). The catalysed reaction is L-glutamine + H2O = L-glutamate + NH4(+). Its pathway is amino-acid biosynthesis; L-arginine biosynthesis; carbamoyl phosphate from bicarbonate: step 1/1. It functions in the pathway pyrimidine metabolism; UMP biosynthesis via de novo pathway; (S)-dihydroorotate from bicarbonate: step 1/3. Its function is as follows. Small subunit of the glutamine-dependent carbamoyl phosphate synthetase (CPSase). CPSase catalyzes the formation of carbamoyl phosphate from the ammonia moiety of glutamine, carbonate, and phosphate donated by ATP, constituting the first step of 2 biosynthetic pathways, one leading to arginine and/or urea and the other to pyrimidine nucleotides. The small subunit (glutamine amidotransferase) binds and cleaves glutamine to supply the large subunit with the substrate ammonia. This is Carbamoyl phosphate synthase small chain from Bacillus cereus (strain ZK / E33L).